We begin with the raw amino-acid sequence, 281 residues long: Probable endonuclease 4 (281 aa).

Positions 69, 109, 145, 179, 182, 216, 229, 231, and 261 each coordinate Zn(2+).

It belongs to the AP endonuclease 2 family. The cofactor is Zn(2+).

It catalyses the reaction Endonucleolytic cleavage to 5'-phosphooligonucleotide end-products.. Endonuclease IV plays a role in DNA repair. It cleaves phosphodiester bonds at apurinic or apyrimidinic (AP) sites, generating a 3'-hydroxyl group and a 5'-terminal sugar phosphate. This is Probable endonuclease 4 from Yersinia enterocolitica serotype O:8 / biotype 1B (strain NCTC 13174 / 8081).